A 1133-amino-acid chain; its full sequence is MTQLAVPSPAAPTLPDLVEIQRESFLWFLREGFEEELLSFSPIVDYTGKLELHFLPEYRPGDPSKGYKINKPRYDPEEAKRRDATYQAQIRVPTRLINKETGEIKDMDVFIGELPLMTDRGTFIINGAERVIVNQIVRSPGVYYKSELDKNGRRTYSASLIPNRGAWLKFETDKNGLVWVRIDKTRKLSAAVLLKALGLSDSEIYDSLRHPEFFQKTMEKEGHYSEEEALMELYRKLRPGEPPTVSGGQQLLESRFFDPKRYDLGRVGRYKLNKKLNLNVAENVRVLTVTDILAVIDYLINLEYDIGHVDDIDHLGNRRVRSVGELLQNQVRVGLNRLERIIRERMTVSESENLTPASLVNPKPLVAAIKEFFGSSQLSQFMDQTNPLAELTHKRRLSALGPGGLSRERAGFAVRDIHPSHYGRICPIETPEGPNAGLIGSLATHARVNQYGFIESPYYRVENGVVRKDLGMVYLTADEEDEYRVAPGDVPVDAEGRITADLVPVRYRQEFTTAHPSEVHYVQVSPVQLISVATSLIPFLEHDDANRALMGANMQRQAVPLLKPDRPYVGTGLEAQAARDSGMVVVSRTSGVVTYVSADEIVVRPDDGGDPIVYRLQKYQRSNQDTCLNQRPLVYAGDRVVPGQVLADGPATEGGELALGQNVLVAYMPWEGYNYEDAILISERLVYDDVFTSVHIEKYEIEARQTKLGPEEITREIPNVGEDALRNLDENGIVRIGAWVEAGDILVGKVTPKGESDQPPEERLLRAIFGEKARDVRDNSLRVPNGERGRVVDVRIFTREQGDELPPGANMVVRVYIALKRKIQVGDKIAGRHGNKGIISRILPIEDMPYLADGTPVDVVLNPLGVPSRMNVGQVYECLLGWAAEHLGVRFKLMPFDEMHGLEASRLTVEAKLREAREKTGKDWIFNPEGKYCGKIQVFDGRTGEPFDQPVTVGRAYMLKLVHLVDDKIHARSTGPYSLVTQQPLGGKAQQGGQRFGEMEVWALEAFGAAYILQELLTVKSDDMVGRNEALNAIVKGKPIPRPGTPESFKVLVRELQSLCLDVSVHKVEVDSDGQTRDVEVDLMADVSSRHTPSRPTYESVTSEDLSPAAGGTFTLARRSREEDEDREEEDDF.

The tract at residues Ala-1085–Phe-1133 is disordered. Residues Arg-1090–Asp-1105 show a composition bias toward polar residues. Residues Glu-1123–Phe-1133 show a composition bias toward acidic residues.

The protein belongs to the RNA polymerase beta chain family. In terms of assembly, in cyanobacteria the RNAP catalytic core is composed of 2 alpha, 1 beta, 1 beta', 1 gamma and 1 omega subunit. When a sigma factor is associated with the core the holoenzyme is formed, which can initiate transcription.

It carries out the reaction RNA(n) + a ribonucleoside 5'-triphosphate = RNA(n+1) + diphosphate. Functionally, DNA-dependent RNA polymerase catalyzes the transcription of DNA into RNA using the four ribonucleoside triphosphates as substrates. The sequence is that of DNA-directed RNA polymerase subunit beta from Synechococcus sp. (strain JA-3-3Ab) (Cyanobacteria bacterium Yellowstone A-Prime).